We begin with the raw amino-acid sequence, 401 residues long: Diphosphomevalonate decarboxylase (401 aa).

Ala-2 carries the post-translational modification N-acetylalanine. Residues 24–27 (YWGK), Arg-79, 157–162 (SGSACR), and Thr-213 each bind (R)-5-diphosphomevalonate. The segment at 382–401 (VLDDPHHHLLGPDGLPQRDL) is disordered.

This sequence belongs to the diphosphomevalonate decarboxylase family. Homodimer.

The protein resides in the cytoplasm. The catalysed reaction is (R)-5-diphosphomevalonate + ATP = isopentenyl diphosphate + ADP + phosphate + CO2. It participates in steroid biosynthesis; cholesterol biosynthesis. In terms of biological role, catalyzes the ATP dependent decarboxylation of (R)-5-diphosphomevalonate to form isopentenyl diphosphate (IPP). Functions in the mevalonate (MVA) pathway leading to isopentenyl diphosphate (IPP), a key precursor for the biosynthesis of isoprenoids and sterol synthesis. The protein is Diphosphomevalonate decarboxylase (Mvd) of Rattus norvegicus (Rat).